We begin with the raw amino-acid sequence, 581 residues long: Arginine--tRNA ligase (581 aa).

The short motif at 126–136 is the 'HIGH' region element; it reads PNLAKEMHVGH.

The protein belongs to the class-I aminoacyl-tRNA synthetase family. As to quaternary structure, monomer.

Its subcellular location is the cytoplasm. The enzyme catalyses tRNA(Arg) + L-arginine + ATP = L-arginyl-tRNA(Arg) + AMP + diphosphate. This is Arginine--tRNA ligase from Shewanella woodyi (strain ATCC 51908 / MS32).